A 245-amino-acid chain; its full sequence is uncharacterized protein (245 aa).

An N-terminal signal peptide occupies residues 1–19; it reads MKLTQFISYAILSLSGVQA.

Its subcellular location is the secreted. This is an uncharacterized protein from Arthroderma benhamiae (strain ATCC MYA-4681 / CBS 112371) (Trichophyton mentagrophytes).